The primary structure comprises 373 residues: D-alanine--D-alanine ligase (373 aa).

The ATP-grasp domain maps to 156–363; that stretch reads KKLLAAEGLP…YPTLLAAMVD (208 aa). 184–239 lines the ATP pocket; the sequence is RERLGLPVFVKPARGGSSIGVSRVTAWDELPAAVALARRHDPKVIVEAAVIGRELE. Mg(2+) is bound by residues aspartate 318, glutamate 330, and asparagine 332.

Belongs to the D-alanine--D-alanine ligase family. Mg(2+) serves as cofactor. Requires Mn(2+) as cofactor.

Its subcellular location is the cytoplasm. It carries out the reaction 2 D-alanine + ATP = D-alanyl-D-alanine + ADP + phosphate + H(+). It functions in the pathway cell wall biogenesis; peptidoglycan biosynthesis. In terms of biological role, cell wall formation. The polypeptide is D-alanine--D-alanine ligase (Mycolicibacterium smegmatis (strain ATCC 700084 / mc(2)155) (Mycobacterium smegmatis)).